Here is a 336-residue protein sequence, read N- to C-terminus: 2-phospho-L-lactate transferase (336 aa).

Position 49 (D49) interacts with 7,8-didemethyl-8-hydroxy-5-deazariboflavin.

Belongs to the CofD family. As to quaternary structure, homodimer. The cofactor is Mg(2+).

The catalysed reaction is (2S)-lactyl-2-diphospho-5'-guanosine + 7,8-didemethyl-8-hydroxy-5-deazariboflavin = oxidized coenzyme F420-0 + GMP + H(+). It participates in cofactor biosynthesis; coenzyme F420 biosynthesis. Functionally, catalyzes the transfer of the 2-phospholactate moiety from (2S)-lactyl-2-diphospho-5'-guanosine to 7,8-didemethyl-8-hydroxy-5-deazariboflavin (FO) with the formation of oxidized coenzyme F420-0 and GMP. The protein is 2-phospho-L-lactate transferase of Halobacterium salinarum (strain ATCC 700922 / JCM 11081 / NRC-1) (Halobacterium halobium).